The primary structure comprises 562 residues: Undecaprenyl phosphate-alpha-4-amino-4-deoxy-L-arabinose arabinosyl transferase (562 aa).

The next 12 membrane-spanning stretches (helical) occupy residues 14-34 (IKFSITIIAFILLYYLIPLNY), 91-111 (FSVRFGSFLFTLFSANLIYLF), 120-140 (ILSLNSVIIFLSILLVYIIGT), 142-162 (SVLDSIISFWINLSMISFWLA), 186-206 (FITKGFISLLIPFISIFIWLF), 215-235 (TIIHCFFSLLISILIIFPWIY), 267-287 (PFWYYFPIFIIGCLPWSGFLF), 302-322 (IEFYLLLWIIVQFCFFSISKG), 324-344 (LPTYILPCFFPLSILIAKNIE), 354-374 (LLKINSIINTIVGSTLLIFII), 395-415 (LILCIFSIFVWIFLNLCIIFN), and 425-445 (LSIIGIAFLFGLYVPEKIIYA).

This sequence belongs to the glycosyltransferase 83 family.

Its subcellular location is the cell inner membrane. It catalyses the reaction 4-amino-4-deoxy-alpha-L-arabinopyranosyl di-trans,octa-cis-undecaprenyl phosphate + lipid IVA = lipid IIA + di-trans,octa-cis-undecaprenyl phosphate.. It participates in lipopolysaccharide metabolism; 4-amino-4-deoxy-beta-L-arabinose-lipid A biosynthesis. In terms of biological role, catalyzes the transfer of the L-Ara4N moiety of the glycolipid undecaprenyl phosphate-alpha-L-Ara4N to lipid A. The modified arabinose is attached to lipid A and is required for resistance to polymyxin and cationic antimicrobial peptides. This is Undecaprenyl phosphate-alpha-4-amino-4-deoxy-L-arabinose arabinosyl transferase from Wigglesworthia glossinidia brevipalpis.